The sequence spans 523 residues: NAD(P)H-quinone oxidoreductase subunit 2 (523 aa).

13 consecutive transmembrane segments (helical) span residues 29-49 (AVAP…VDLA), 57-77 (WVPP…ALQW), 94-114 (LAIA…MISW), 128-148 (AGIL…TDLV), 182-202 (LLVG…LYGL), 223-243 (AALA…AVPF), 255-275 (PTPV…ALAL), 291-311 (LLFT…ALAQ), 317-337 (MLAY…VCGT), 345-365 (VLYT…IILF), 389-409 (LGLS…GFFG), 424-444 (VLVV…IGVI), and 477-497 (VALV…NPLF).

The protein belongs to the complex I subunit 2 family. NDH-1 can be composed of about 15 different subunits; different subcomplexes with different compositions have been identified which probably have different functions.

Its subcellular location is the cellular thylakoid membrane. It carries out the reaction a plastoquinone + NADH + (n+1) H(+)(in) = a plastoquinol + NAD(+) + n H(+)(out). The enzyme catalyses a plastoquinone + NADPH + (n+1) H(+)(in) = a plastoquinol + NADP(+) + n H(+)(out). In terms of biological role, NDH-1 shuttles electrons from an unknown electron donor, via FMN and iron-sulfur (Fe-S) centers, to quinones in the respiratory and/or the photosynthetic chain. The immediate electron acceptor for the enzyme in this species is believed to be plastoquinone. Couples the redox reaction to proton translocation, and thus conserves the redox energy in a proton gradient. Cyanobacterial NDH-1 also plays a role in inorganic carbon-concentration. This is NAD(P)H-quinone oxidoreductase subunit 2 from Synechococcus sp. (strain WH7803).